The following is a 1176-amino-acid chain: Surface-layer 125 kDa protein (1176 aa).

An N-terminal signal peptide occupies residues 1–30; that stretch reads MAKQNKGRKFFAASATAALVASAIVPVASA. SLH domains are found at residues 31 to 88, 89 to 152, and 153 to 216; these read AQLN…LEAE, GDVN…DLSE, and FADA…PKVD.

Its subcellular location is the secreted. The protein localises to the cell wall. It is found in the S-layer. Functionally, the S-layer is a paracrystalline mono-layered assembly of proteins which coat the surface of bacteria. This Lysinibacillus sphaericus (Bacillus sphaericus) protein is Surface-layer 125 kDa protein.